We begin with the raw amino-acid sequence, 441 residues long: Double-stranded RNA-binding protein 1 (441 aa).

3 DRBM domains span residues 1-71 (MYKS…HLSS), 86-155 (SYKS…SLPQ), and 169-237 (SYKN…HFED). Residues 69–88 (LSSLPLPPPPPPSENQSSYK) are disordered.

Its function is as follows. Binds double-stranded RNA. The polypeptide is Double-stranded RNA-binding protein 1 (DRB1) (Oryza sativa subsp. japonica (Rice)).